Reading from the N-terminus, the 471-residue chain is dTDP-4-dehydro-6-deoxy-alpha-D-glucopyranose 2,3-dehydratase (471 aa).

Residues W67, 155 to 159 (TRSNY), S193, N238, W288, R351, 367 to 369 (QCT), 372 to 373 (NY), and 405 to 408 (EGGR) each bind dTDP-4-dehydro-6-deoxy-alpha-D-glucose.

The protein belongs to the hexose 2,3-dehydratase family. Homodimer.

The enzyme catalyses dTDP-4-dehydro-6-deoxy-alpha-D-glucose = dTDP-3,4-didehydro-2,6-dideoxy-alpha-D-glucose + H2O. The protein operates within antibiotic biosynthesis. Functionally, involved in the biosynthesis of the 2,3,6-trideoxysugar L-epivancosamine, the terminal sugar added to the aglycone scaffold of chloroeremomycin, a member of the glycopeptide antibiotics vancomycin family. Catalyzes the removal of the hydroxyl group at position C-2 of the hexose ring of dTDP-4-dehydro-6-deoxy-alpha-D-glucopyranose, and the oxidation of the hydroxyl group at position C-3 to form a carbonyl functionality. The product of the reaction, dTDP-2,6-dideoxy-D-glycero-hex-2-enos-4-ulose, is a highly unstable diketosugar, which spontaneously forms dTDP-3,4-didehydro-2,6-dideoxy-alpha-D-glucose. The chain is dTDP-4-dehydro-6-deoxy-alpha-D-glucopyranose 2,3-dehydratase from Amycolatopsis orientalis (Nocardia orientalis).